Consider the following 354-residue polypeptide: Putative cinnamyl alcohol dehydrogenase 4 (354 aa).

Positions 47, 69, 70, 100, 103, 106, 114, and 163 each coordinate Zn(2+). NADP(+)-binding positions include threonine 167, 188-193 (GLGGLG), 211-216 (STSESK), threonine 251, and 297-299 (SVT).

Belongs to the zinc-containing alcohol dehydrogenase family. As to quaternary structure, homodimer. Zn(2+) serves as cofactor.

It carries out the reaction (E)-cinnamyl alcohol + NADP(+) = (E)-cinnamaldehyde + NADPH + H(+). The enzyme catalyses (E)-coniferol + NADP(+) = (E)-coniferaldehyde + NADPH + H(+). It catalyses the reaction (E)-sinapyl alcohol + NADP(+) = (E)-sinapaldehyde + NADPH + H(+). The catalysed reaction is (E)-4-coumaroyl alcohol + NADP(+) = (E)-4-coumaraldehyde + NADPH + H(+). It carries out the reaction (E)-caffeyl alcohol + NADP(+) = (E)-caffeyl aldehyde + NADPH + H(+). Its pathway is aromatic compound metabolism; phenylpropanoid biosynthesis. In terms of biological role, involved in lignin biosynthesis. Catalyzes the final step specific for the production of lignin monomers. Catalyzes the NADPH-dependent reduction of coniferaldehyde, 5-hydroxyconiferaldehyde, sinapaldehyde, 4-coumaraldehyde and caffeyl aldehyde to their respective alcohols. In Oryza sativa subsp. japonica (Rice), this protein is Putative cinnamyl alcohol dehydrogenase 4.